A 403-amino-acid polypeptide reads, in one-letter code: Tripartite motif-containing protein 59 (403 aa).

An RING-type zinc finger spans residues Cys-10 to Arg-60. The segment at Pro-92–Leu-134 adopts a B box-type zinc-finger fold. Cys-97, His-100, Cys-120, and His-126 together coordinate Zn(2+). The stretch at Leu-163–Ser-246 forms a coiled coil. Residues Ile-329–Asn-349 traverse the membrane as a helical segment.

Belongs to the TRIM/RBCC family. Interacts with ECSIT.

It localises to the endoplasmic reticulum membrane. The enzyme catalyses S-ubiquitinyl-[E2 ubiquitin-conjugating enzyme]-L-cysteine + [acceptor protein]-L-lysine = [E2 ubiquitin-conjugating enzyme]-L-cysteine + N(6)-ubiquitinyl-[acceptor protein]-L-lysine.. Its pathway is protein modification; protein ubiquitination. Functionally, E3 ubiquitin ligase involved in different processes such as development and immune response. Serves as a negative regulator for innate immune signaling pathways by suppressing RLR-induced activation of IRF3/7 and NF-kappa-B via interaction with adapter ECSIT. Regulates autophagy through modulating both the transcription and the ubiquitination of BECN1. On the one hand, regulates the transcription of BECN1 through negatively modulating the NF-kappa-B pathway. On the other hand, regulates TRAF6-mediated 'Lys-63'-linked ubiquitination of BECN1, thus affecting the formation of the BECN1-PIK3C3 complex. In addition, mediates 'Lys-48'-linked ubiquitination of TRAF6 and thereby promotes TRAF6 proteasomal degradation. Also acts as a critical regulator for early embryo development from blastocyst stage to gastrula through modulating F-actin assembly and WASH1 'Lys-63'-linked ubiquitination. The protein is Tripartite motif-containing protein 59 (TRIM59) of Homo sapiens (Human).